The primary structure comprises 215 residues: Protein GET1 (215 aa).

Residues 1–4 (MINL) are Lumenal-facing. Residues 5-24 (ALVIFLCTLLNQIVSWVGKS) traverse the membrane as a helical segment. The Cytoplasmic segment spans residues 25–108 (VLQEIAFTAY…SFSKKFSTLL (84 aa)). A coiled-coil region spans residues 73 to 94 (AKLRRKLDKGLADLEKTNNTLS). A helical transmembrane segment spans residues 109–129 (WLMTTGAQFLLSWWFRKQPIF). At 130–153 (WLPEGWVPYPVAWLLSFPSAPIGS) the chain is on the lumenal side. The helical transmembrane segment at 154–170 (VSSGAWGAICRRVLSTL) threads the bilayer. Residues 171–215 (QEIIQSVLAPSPAATGPVPTGPSSAKNDQPEAKIEALALEHEKLD) lie on the Cytoplasmic side of the membrane. The interval 181-202 (SPAATGPVPTGPSSAKNDQPEA) is disordered.

It belongs to the WRB/GET1 family. In terms of assembly, interacts with GET3.

The protein localises to the endoplasmic reticulum membrane. Required for the post-translational delivery of tail-anchored (TA) proteins to the endoplasmic reticulum. Acts as a membrane receptor for soluble GET3, which recognizes and selectively binds the transmembrane domain of TA proteins in the cytosol. The polypeptide is Protein GET1 (Cryptococcus neoformans var. neoformans serotype D (strain B-3501A) (Filobasidiella neoformans)).